We begin with the raw amino-acid sequence, 114 residues long: MNVLLGGLVIFATFVTLCNGSCYVIRHKIVPGETIKECTDLKGNKHPLDSRWRTEDCELCACRDIEISCCSLVSTPVGYDRHNCRKIFNKETCKISVVEKTDPNRPCGVSGWIS.

A signal peptide spans 1–20 (MNVLLGGLVIFATFVTLCNG). Cystine bridges form between Cys-22–Cys-70, Cys-38–Cys-62, Cys-57–Cys-93, Cys-60–Cys-69, and Cys-84–Cys-107.

Belongs to the beta-microseminoprotein family.

The protein localises to the secreted. The chain is Beta-microseminoprotein E1 (MSPE) from Saguinus oedipus (Cotton-top tamarin).